Here is a 353-residue protein sequence, read N- to C-terminus: Methionine import ATP-binding protein MetN (353 aa).

Residues 11-251 (ITFDRVEKSF…PEHPTTRSFL (241 aa)) enclose the ABC transporter domain. Residue 48–55 (GRSGAGKS) participates in ATP binding.

It belongs to the ABC transporter superfamily. Methionine importer (TC 3.A.1.24) family. In terms of assembly, the complex is composed of two ATP-binding proteins (MetN), two transmembrane proteins (MetI) and a solute-binding protein (MetQ).

The protein resides in the cell inner membrane. The catalysed reaction is L-methionine(out) + ATP + H2O = L-methionine(in) + ADP + phosphate + H(+). The enzyme catalyses D-methionine(out) + ATP + H2O = D-methionine(in) + ADP + phosphate + H(+). Part of the ABC transporter complex MetNIQ involved in methionine import. Responsible for energy coupling to the transport system. The sequence is that of Methionine import ATP-binding protein MetN from Cereibacter sphaeroides (strain ATCC 17023 / DSM 158 / JCM 6121 / CCUG 31486 / LMG 2827 / NBRC 12203 / NCIMB 8253 / ATH 2.4.1.) (Rhodobacter sphaeroides).